The following is a 145-amino-acid chain: uncharacterized protein (145 aa).

2 disordered regions span residues 1–41 (MRRL…PPGT) and 122–145 (RLPSLVHGPSHPDSQHPREVPLAL). Over residues 20-34 (GGPQNGTSGCTTAPQ) the composition is skewed to polar residues. Positions 134–145 (DSQHPREVPLAL) are enriched in basic and acidic residues.

Ubiquitous.

This is an uncharacterized protein from Homo sapiens (Human).